The sequence spans 129 residues: D-ribose pyranase (129 aa).

The active-site Proton donor is His-20. Substrate is bound by residues Asp-28, His-96, and 118–120; that span reads YAN.

It belongs to the RbsD / FucU family. RbsD subfamily. As to quaternary structure, homodecamer.

The protein resides in the cytoplasm. The catalysed reaction is beta-D-ribopyranose = beta-D-ribofuranose. It participates in carbohydrate metabolism; D-ribose degradation; D-ribose 5-phosphate from beta-D-ribopyranose: step 1/2. Functionally, catalyzes the interconversion of beta-pyran and beta-furan forms of D-ribose. This chain is D-ribose pyranase, found in Staphylococcus haemolyticus (strain JCSC1435).